The primary structure comprises 31 residues: Nemertide alpha-5 (31 aa).

3 cysteine pairs are disulfide-bonded: cysteine 2–cysteine 16, cysteine 9–cysteine 20, and cysteine 15–cysteine 26. Proline 28 and proline 29 each carry 4-hydroxyproline.

Belongs to the nemertide family. In terms of tissue distribution, confined to the epidermis and to the mucus layer.

The protein localises to the secreted. Functionally, highly potent toxin against both insect and some mammalian sodium channels (Nav). It potently inhibits inactivation of insect sodium channels of B.germanica (BgNav1) (EC(50)=7.8 nM) and also delays the inactivation of mammalian Nav with potent activity on Nav1.3/SCN3A and Nav1.4/SCN4A (hNav1.1/SCN1A; EC(50)=102.1 nM, rNav1.2/SCN2A; EC(50)=156.1 nM, rNav1.3/SCN3A; EC(50)=9.4 nM, rNav1.4/SCN4A; EC(50)=15.4 nM, hNav1.5/SCN5A; EC(50)=132.7 nM, mNav1.6/SCN8A; EC(50)=66.9 nM, hNav1.9/SCN9A; EC(50)=73 nM). 1 uM is enough to completely inhibits the inactivation, resulting in sustained non-inactivating currents. In addition, the toxin significantly enhances the recovery from inactivation, and the open state is not required for the toxin to interact with the channel. In vivo, injection into brine shrimp (Artemia salina) stops movement or causes death after 24 hours (EC(50)=0.4 uM). This Ramphogordius pseudolacteus (Ribbon worm) protein is Nemertide alpha-5.